The chain runs to 119 residues: Ribosome-binding factor A (119 aa).

Belongs to the RbfA family. In terms of assembly, monomer. Binds 30S ribosomal subunits, but not 50S ribosomal subunits or 70S ribosomes.

It localises to the cytoplasm. Its function is as follows. One of several proteins that assist in the late maturation steps of the functional core of the 30S ribosomal subunit. Associates with free 30S ribosomal subunits (but not with 30S subunits that are part of 70S ribosomes or polysomes). Required for efficient processing of 16S rRNA. May interact with the 5'-terminal helix region of 16S rRNA. The chain is Ribosome-binding factor A from Buchnera aphidicola subsp. Acyrthosiphon pisum (strain Tuc7).